Here is a 491-residue protein sequence, read N- to C-terminus: CTD small phosphatase-like protein 1 (491 aa).

Disordered regions lie at residues Met1 to Tyr53, Lys140 to Arg198, Lys221 to Pro249, and Thr261 to Thr282. The span at Val17–Pro26 shows a compositional bias: pro residues. A compositionally biased stretch (polar residues) spans Ser37–Asn49. Residues Leu141–Gly156 show a composition bias toward basic and acidic residues. A compositionally biased stretch (polar residues) spans Ala176 to Ala187. The segment covering Gln223 to Asn237 has biased composition (low complexity). 2 stretches are compositionally biased toward polar residues: residues Gly238–Pro249 and Gly264–Gly276. Residues Gln307–Leu465 enclose the FCP1 homology domain. Asp317 serves as the catalytic 4-aspartylphosphate intermediate. Mg(2+) contacts are provided by Asp317, Asp319, and Asn428. Catalysis depends on Asp319, which acts as the Proton donor.

As to quaternary structure, may interact (via phosphatase domain) with cpna-1. Isoform a and isoform b may interact with lim-9 (via LIM zinc-binding domain). Isoform a and isoform b may interact (via FCP1 homology domain) with unc-89 (via fibronectin type-III domain 1, Ig-like C2-type domain 48/49 and protein kinase domain 1 or Ig-like C2-type domain 50, fibronectin type-III domain 2 and protein kinase domain 2); the interaction may act as a molecular bridge to bring two unc-89 molecules together or to stabilize a loop between the 2 protein kinase domains. Mg(2+) serves as cofactor. As to expression, expressed in pharyngeal, vulval and body wall muscles.

It is found in the cytoplasm. It localises to the myofibril. The protein resides in the sarcomere. The protein localises to the m line. The enzyme catalyses O-phospho-L-seryl-[protein] + H2O = L-seryl-[protein] + phosphate. It catalyses the reaction O-phospho-L-threonyl-[protein] + H2O = L-threonyl-[protein] + phosphate. Inhibited by beryllium trifluoride (BeF(3-)) and tetrafluoroaluminate (AlF(4-)) but not by sodium fluoride (NaF) or sodium orthovanadate (Na3VO4). Functionally, phosphatase which may play a role in the egg laying muscles. The chain is CTD small phosphatase-like protein 1 from Caenorhabditis elegans.